Consider the following 236-residue polypeptide: Ras-related protein RabY (236 aa).

Glycine 18 to threonine 25 lines the GTP pocket. An Effector region motif is present at residues tyrosine 40–phenylalanine 48. Residues aspartate 66–aspartate 70 and asparagine 126–aspartate 129 each bind GTP. Low complexity predominate over residues glutamine 192 to glutamine 225. The disordered stretch occupies residues glutamine 192 to glutamine 236. The residue at position 233 (cysteine 233) is a Cysteine methyl ester. A lipid anchor (S-geranylgeranyl cysteine) is attached at cysteine 233. Positions leucine 234–glutamine 236 are cleaved as a propeptide — removed in mature form.

This sequence belongs to the small GTPase superfamily. Rab family.

The protein resides in the cell membrane. The protein is Ras-related protein RabY (rabY) of Dictyostelium discoideum (Social amoeba).